We begin with the raw amino-acid sequence, 101 residues long: Putative pterin-4-alpha-carbinolamine dehydratase (101 aa).

Belongs to the pterin-4-alpha-carbinolamine dehydratase family.

The catalysed reaction is (4aS,6R)-4a-hydroxy-L-erythro-5,6,7,8-tetrahydrobiopterin = (6R)-L-erythro-6,7-dihydrobiopterin + H2O. This is Putative pterin-4-alpha-carbinolamine dehydratase from Rhizobium rhizogenes (strain K84 / ATCC BAA-868) (Agrobacterium radiobacter).